The following is a 553-amino-acid chain: CTP synthase (553 aa).

The segment at 1-270 (MTKYVFVTGG…DRLICEELRL (270 aa)) is amidoligase domain. A CTP-binding site is contributed by Ser-13. UTP is bound at residue Ser-13. ATP is bound by residues 14-19 (SLGKGI) and Asp-71. Asp-71 and Glu-144 together coordinate Mg(2+). Residues 151–153 (DIE), 191–196 (KTKPTQ), and Lys-227 contribute to the CTP site. UTP contacts are provided by residues 191-196 (KTKPTQ) and Lys-227. Residues 295 to 547 (TIGMVGKYVD…VQAALACQQT (253 aa)) form the Glutamine amidotransferase type-1 domain. Gly-356 provides a ligand contact to L-glutamine. The active-site Nucleophile; for glutamine hydrolysis is the Cys-383. Residues 384–387 (LGMQ), Glu-407, and Arg-473 each bind L-glutamine. Active-site residues include His-520 and Glu-522.

This sequence belongs to the CTP synthase family. In terms of assembly, homotetramer.

The catalysed reaction is UTP + L-glutamine + ATP + H2O = CTP + L-glutamate + ADP + phosphate + 2 H(+). The enzyme catalyses L-glutamine + H2O = L-glutamate + NH4(+). It catalyses the reaction UTP + NH4(+) + ATP = CTP + ADP + phosphate + 2 H(+). Its pathway is pyrimidine metabolism; CTP biosynthesis via de novo pathway; CTP from UDP: step 2/2. Allosterically activated by GTP, when glutamine is the substrate; GTP has no effect on the reaction when ammonia is the substrate. The allosteric effector GTP functions by stabilizing the protein conformation that binds the tetrahedral intermediate(s) formed during glutamine hydrolysis. Inhibited by the product CTP, via allosteric rather than competitive inhibition. Catalyzes the ATP-dependent amination of UTP to CTP with either L-glutamine or ammonia as the source of nitrogen. Regulates intracellular CTP levels through interactions with the four ribonucleotide triphosphates. The chain is CTP synthase from Burkholderia mallei (strain NCTC 10229).